The sequence spans 299 residues: Ribosomal RNA small subunit methyltransferase H 1 (299 aa).

Residues 31–33 (GGH), Asp-50, Phe-76, Asp-97, and Gln-104 each bind S-adenosyl-L-methionine.

The protein belongs to the methyltransferase superfamily. RsmH family.

It localises to the cytoplasm. It catalyses the reaction cytidine(1402) in 16S rRNA + S-adenosyl-L-methionine = N(4)-methylcytidine(1402) in 16S rRNA + S-adenosyl-L-homocysteine + H(+). In terms of biological role, specifically methylates the N4 position of cytidine in position 1402 (C1402) of 16S rRNA. This is Ribosomal RNA small subunit methyltransferase H 1 from Acholeplasma laidlawii (strain PG-8A).